A 299-amino-acid polypeptide reads, in one-letter code: Foldase protein PrsA (299 aa).

Positions 1 to 19 are cleaved as a signal peptide; it reads MKKWTIAASLSIGVLALSA. Cys-20 is lipidated: N-palmitoyl cysteine. Cys-20 is lipidated: S-diacylglycerol cysteine. Positions 137–227 constitute a PpiC domain; the sequence is NTEIQAQHIL…HGTHIIKVND (91 aa).

Belongs to the PrsA family.

It is found in the cell membrane. It carries out the reaction [protein]-peptidylproline (omega=180) = [protein]-peptidylproline (omega=0). Its function is as follows. Plays a major role in protein secretion by helping the post-translocational extracellular folding of several secreted proteins. The polypeptide is Foldase protein PrsA (Oceanobacillus iheyensis (strain DSM 14371 / CIP 107618 / JCM 11309 / KCTC 3954 / HTE831)).